Reading from the N-terminus, the 72-residue chain is uncharacterized protein (72 aa).

A disordered region spans residues 52 to 72 (KGGRQRDEAVGVEELCKQHKE). Over residues 55–72 (RQRDEAVGVEELCKQHKE) the composition is skewed to basic and acidic residues.

The protein belongs to the YiiE family.

This is an uncharacterized protein from Escherichia coli O6:H1 (strain CFT073 / ATCC 700928 / UPEC).